Here is an 813-residue protein sequence, read N- to C-terminus: Calpain-7 (813 aa).

Residue methionine 1 is modified to N-acetylmethionine. Residue threonine 95 is modified to Phosphothreonine. Positions 232 to 540 constitute a Calpain catalytic domain; that stretch reads RERFAYPMPF…YDVIYLSWNP (309 aa). Catalysis depends on residues cysteine 290, histidine 458, and asparagine 478. A domain III region spans residues 541-701; it reads GLFKESTCIH…INGKWSGQSA (161 aa). Residues 702–813 are domain N; sequence GGCGNFQETH…IIPIKITQLQ (112 aa).

The protein belongs to the peptidase C2 family. As to expression, ubiquitous.

The protein localises to the nucleus. Functionally, calcium-regulated non-lysosomal thiol-protease. The protein is Calpain-7 (CAPN7) of Homo sapiens (Human).